We begin with the raw amino-acid sequence, 252 residues long: Large ribosomal subunit protein uL4 (252 aa).

Belongs to the universal ribosomal protein uL4 family. As to quaternary structure, part of the 50S ribosomal subunit.

One of the primary rRNA binding proteins, this protein initially binds near the 5'-end of the 23S rRNA. It is important during the early stages of 50S assembly. It makes multiple contacts with different domains of the 23S rRNA in the assembled 50S subunit and ribosome. Functionally, forms part of the polypeptide exit tunnel. The chain is Large ribosomal subunit protein uL4 from Archaeoglobus fulgidus (strain ATCC 49558 / DSM 4304 / JCM 9628 / NBRC 100126 / VC-16).